A 227-amino-acid polypeptide reads, in one-letter code: Transmembrane emp24 domain-containing protein 1 (227 aa).

The signal sequence occupies residues 1-23; the sequence is MMAAGAALALALWLLMPPVEVGG. Residues 24 to 194 lie on the Extracellular side of the membrane; the sequence is AGPPPIQDGE…LQEGNLERVN (171 aa). Residues 43–125 form the GOLD domain; the sequence is KQCFYQSAPA…EKLVFFELIF (83 aa). The stretch at 145–170 forms a coiled coil; that stretch reads EMLDVKMEDIKESIETMRTRLERSIQ. A helical membrane pass occupies residues 195–215; that stretch reads FWSAVNVAVLLLVAVLQVCTL. The Cytoplasmic portion of the chain corresponds to 216-227; the sequence is KRFFQDKRPVPT. The COPII vesicle coat-binding motif lies at 218–219; that stretch reads FF. Residues 218–227 carry the COPI vesicle coat-binding motif; the sequence is FFQDKRPVPT.

Belongs to the EMP24/GP25L family. As to quaternary structure, homodimer in endoplasmic reticulum, endoplasmic reticulum-Golgi intermediate compartment and cis-Golgi network. Interacts with IL1RL1. Interacts with RNF26; this interaction is important to modulate innate immune signaling through the cGAS-STING pathway. Widely expressed.

It localises to the cell membrane. The protein resides in the endoplasmic reticulum membrane. It is found in the golgi apparatus. The protein localises to the cis-Golgi network membrane. Its subcellular location is the endoplasmic reticulum-Golgi intermediate compartment membrane. Its function is as follows. Potential role in vesicular protein trafficking, mainly in the early secretory pathway. May act as a cargo receptor at the lumenal side for incorporation of secretory cargo molecules into transport vesicles and may be involved in vesicle coat formation at the cytoplasmic side. Plays a positive role in IL-33-mediated IL-8 and IL-6 production by interacting with interleukin-33 receptor IL1RL1. Also plays a role in the modulation of innate immune signaling through the cGAS-STING pathway by interacting with RNF26. In Homo sapiens (Human), this protein is Transmembrane emp24 domain-containing protein 1 (TMED1).